Consider the following 123-residue polypeptide: Defensin beta 118 (123 aa).

An N-terminal signal peptide occupies residues 1–19; it reads MKLLLLALPMLVLLPQVIP. 3 disulfide bridges follow: C27/C54, C34/C48, and C38/C55. Positions 65–123 are excised as a propeptide; that stretch reads VPTTSPTPLSDSTRGVIDDILTVRFTTDYFEVSSKKNMVEESEVGQGTQTSLPNVHHSS. The tract at residues 100–123 is disordered; sequence KNMVEESEVGQGTQTSLPNVHHSS. Residues 109 to 123 are compositionally biased toward polar residues; the sequence is GQGTQTSLPNVHHSS.

This sequence belongs to the beta-defensin family. In terms of processing, the three-dimensional structure formed by the three intramolecular disulfide bridges is indispensable for antimicrobial activity.

It localises to the secreted. Functionally, host defense peptide that exhibits antimicrobial activity against both Gram-negative bacteria, such as E.coli and S.typhimurium, and Gram-positive bacteria, such as S.aureus and B.subtilis. Inhibits cell adhesion of E.coli on intestinal epithelial enterocytes. Causes rapid permeabilization of both the outer and inner membrane of E.coli, leading to morphological alterations on the bacterial surface. Binds to bacterial lipopolysaccharides (LPS) with high affinity, and may thereby be involved in immunoregulation through LPS neutralization. May contribute to epididymal innate immunity and protect the sperm against attack by microorganisms. In Pongo pygmaeus (Bornean orangutan), this protein is Defensin beta 118 (DEFB118).